Here is a 154-residue protein sequence, read N- to C-terminus: Nucleoside diphosphate kinase A2 (154 aa).

Residues K13, F61, R89, T95, R106, and N116 each coordinate ATP. The active-site Pros-phosphohistidine intermediate is H119.

It belongs to the NDK family. The cofactor is Mg(2+).

It is found in the cytoplasm. It carries out the reaction a 2'-deoxyribonucleoside 5'-diphosphate + ATP = a 2'-deoxyribonucleoside 5'-triphosphate + ADP. The catalysed reaction is a ribonucleoside 5'-diphosphate + ATP = a ribonucleoside 5'-triphosphate + ADP. Major role in the synthesis of nucleoside triphosphates other than ATP. The ATP gamma phosphate is transferred to the NDP beta phosphate via a ping-pong mechanism, using a phosphorylated active-site intermediate. The protein is Nucleoside diphosphate kinase A2 of Xenopus laevis (African clawed frog).